The primary structure comprises 59 residues: Large ribosomal subunit protein uL30 (59 aa).

This sequence belongs to the universal ribosomal protein uL30 family. In terms of assembly, part of the 50S ribosomal subunit.

The chain is Large ribosomal subunit protein uL30 from Listeria welshimeri serovar 6b (strain ATCC 35897 / DSM 20650 / CCUG 15529 / CIP 8149 / NCTC 11857 / SLCC 5334 / V8).